A 302-amino-acid polypeptide reads, in one-letter code: Uricase (302 aa).

S2 is subject to N-acetylserine. Residues K11 and T58 each act as charge relay system in the active site. 5-hydroxyisourate-binding residues include T58, D59, F160, R177, V228, Q229, and N255. T58 lines the O2 pocket. The urate site is built by T58, D59, F160, R177, V228, Q229, and N255. N255 serves as a coordination point for O2. The Charge relay system role is filled by H257. Positions 300–302 match the Microbody targeting signal motif; sequence SKL.

It belongs to the uricase family. Homotetramer.

The protein resides in the peroxisome. The catalysed reaction is urate + O2 + H2O = 5-hydroxyisourate + H2O2. Its pathway is purine metabolism; urate degradation; (S)-allantoin from urate: step 1/3. Its activity is regulated as follows. 8-Azaxanthine is one of the most potent competitive inhibitors of uricase activity. Hypoxanthine has only a small inhibitor effect, and caffeine has no effect at all. Azide not only competes with dioxygen but also competes with the substrate for its enzymatic site. Urate oxidase is a cofactorless enzyme involved in the metabolism of purines. Catalyzes, in the presence of molecular oxygen, the hydroxylation of uric acid to metastable 5-hydroxyisourate (5-HIU) which is further degraded to allantoin. The protein is Uricase of Aspergillus flavus.